A 113-amino-acid chain; its full sequence is Iron-sulfur cluster insertion protein ErpA (113 aa).

Residues Cys41, Cys105, and Cys107 each coordinate iron-sulfur cluster.

It belongs to the HesB/IscA family. Homodimer. It depends on iron-sulfur cluster as a cofactor.

Its function is as follows. Required for insertion of 4Fe-4S clusters for at least IspG. The polypeptide is Iron-sulfur cluster insertion protein ErpA (Vibrio vulnificus (strain YJ016)).